A 253-amino-acid chain; its full sequence is 5'-nucleotidase SurE (253 aa).

Positions 8, 9, 39, and 95 each coordinate a divalent metal cation.

The protein belongs to the SurE nucleotidase family. It depends on a divalent metal cation as a cofactor.

The protein localises to the cytoplasm. The enzyme catalyses a ribonucleoside 5'-phosphate + H2O = a ribonucleoside + phosphate. Nucleotidase that shows phosphatase activity on nucleoside 5'-monophosphates. In Kosmotoga olearia (strain ATCC BAA-1733 / DSM 21960 / TBF 19.5.1), this protein is 5'-nucleotidase SurE.